Consider the following 338-residue polypeptide: Ketol-acid reductoisomerase (NADP(+)) (338 aa).

A KARI N-terminal Rossmann domain is found at 1–181 (MKVFYDKDAD…GGGRAGIIET (181 aa)). NADP(+) contacts are provided by residues 24-27 (YGSQ), Arg47, and Ser52. Residue His107 is part of the active site. Position 133 (Gly133) interacts with NADP(+). Residues 182-327 (NFREETETDL…SKLRAMMPWI (146 aa)) form the KARI C-terminal knotted domain. Mg(2+) contacts are provided by Asp190, Glu194, Glu226, and Glu230. Substrate is bound at residue Ser251.

The protein belongs to the ketol-acid reductoisomerase family. It depends on Mg(2+) as a cofactor.

It carries out the reaction (2R)-2,3-dihydroxy-3-methylbutanoate + NADP(+) = (2S)-2-acetolactate + NADPH + H(+). The catalysed reaction is (2R,3R)-2,3-dihydroxy-3-methylpentanoate + NADP(+) = (S)-2-ethyl-2-hydroxy-3-oxobutanoate + NADPH + H(+). Its pathway is amino-acid biosynthesis; L-isoleucine biosynthesis; L-isoleucine from 2-oxobutanoate: step 2/4. It functions in the pathway amino-acid biosynthesis; L-valine biosynthesis; L-valine from pyruvate: step 2/4. In terms of biological role, involved in the biosynthesis of branched-chain amino acids (BCAA). Catalyzes an alkyl-migration followed by a ketol-acid reduction of (S)-2-acetolactate (S2AL) to yield (R)-2,3-dihydroxy-isovalerate. In the isomerase reaction, S2AL is rearranged via a Mg-dependent methyl migration to produce 3-hydroxy-3-methyl-2-ketobutyrate (HMKB). In the reductase reaction, this 2-ketoacid undergoes a metal-dependent reduction by NADPH to yield (R)-2,3-dihydroxy-isovalerate. This is Ketol-acid reductoisomerase (NADP(+)) from Burkholderia thailandensis (strain ATCC 700388 / DSM 13276 / CCUG 48851 / CIP 106301 / E264).